Reading from the N-terminus, the 277-residue chain is Hemin import ATP-binding protein HmuV (277 aa).

In terms of domain architecture, ABC transporter spans 25-260 (IHAQGLNLIL…DIIERVYGWP (236 aa)). 57 to 64 (GPNGAGKS) provides a ligand contact to ATP.

It belongs to the ABC transporter superfamily. Heme (hemin) importer (TC 3.A.1.14.5) family. In terms of assembly, the complex is composed of two ATP-binding proteins (HmuV), two transmembrane proteins (HmuU) and a solute-binding protein (HmuT).

The protein localises to the cell inner membrane. Functionally, part of the ABC transporter complex HmuTUV involved in hemin import. Responsible for energy coupling to the transport system. In Photobacterium profundum (strain SS9), this protein is Hemin import ATP-binding protein HmuV.